The primary structure comprises 650 residues: Solute carrier family 23 member 2 (650 aa).

Positions 1–20 are enriched in polar residues; the sequence is MMGIGKNTTSKSMEAGSSTE. Residues 1–21 form a disordered region; that stretch reads MMGIGKNTTSKSMEAGSSTEG. Residues 9–110 are Cytoplasmic-facing; the sequence is TSKSMEAGSS…LCIFLGLQHY (102 aa). A Phosphoserine modification is found at Ser70. A Phosphothreonine modification is found at Thr75. Ser78 carries the phosphoserine modification. Thr79 is subject to Phosphothreonine. At Ser81 the chain carries Phosphoserine. A helical membrane pass occupies residues 111–131; the sequence is LTCFSGTIAVPFLLADAMCVG. At 132–139 the chain is on the extracellular side; the sequence is YDQWATSQ. A helical membrane pass occupies residues 140–160; sequence LIGTIFFCVGITTLLQTTFGC. A topological domain (cytoplasmic) is located at residue Arg161. The chain crosses the membrane as a helical span at residues 162 to 182; the sequence is LPLFQASAFAFLAPARAILSL. The Extracellular segment spans residues 183-218; it reads DKWKCNTTDVSVANGTAELLHTEHIWYPRIREIQGA. N-linked (GlcNAc...) asparagine glycosylation is found at Asn188 and Asn196. A helical membrane pass occupies residues 219-239; it reads IIMSSLIEVVIGLLGLPGALL. Over 240-266 the chain is Cytoplasmic; sequence KYIGPLTITPTVALIGLSGFQAAGERA. The chain crosses the membrane as a helical span at residues 267-284; the sequence is GKHWGIAMLTIFLVLLFS. Topologically, residues 285–288 are extracellular; that stretch reads QYAR. Residues 289-302 constitute an intramembrane region (helical); sequence NVKFPLPIYKSKKG. Residues 303 to 309 are Extracellular-facing; sequence WTAYKLQ. A helical membrane pass occupies residues 310-330; it reads LFKMFPIILAILVSWLLCFIF. Residues 331–371 lie on the Cytoplasmic side of the membrane; that stretch reads TVTDVFPPDSTKYGFYARTDARQGVLLVAPWFKVPYPFQWG. A helical transmembrane segment spans residues 372 to 392; the sequence is LPTVSAAGVIGMLSAVVASII. Over 393–417 the chain is Extracellular; the sequence is ESIGDYYACARLSCAPPPPIHAINR. A helical membrane pass occupies residues 418–438; the sequence is GIFVEGLSCVLDGIFGTGNGS. The Cytoplasmic segment spans residues 439–461; sequence TSSSPNIGVLGITKVGSRRVIQC. Residues 462 to 482 traverse the membrane as a helical segment; sequence GAALMLALGMIGKFSALFASL. At 483 to 485 the chain is on the extracellular side; the sequence is PDP. A helical transmembrane segment spans residues 486–506; that stretch reads VLGALFCTLFGMITAVGLSNL. Residues 507-516 are Cytoplasmic-facing; it reads QFIDLNSSRN. The chain crosses the membrane as a helical span at residues 517–537; the sequence is LFVLGFSIFFGLVLPSYLRQN. The Extracellular segment spans residues 538–547; sequence PLVTGITGID. A helical transmembrane segment spans residues 548-568; that stretch reads QVLNVLLTTAMFVGGCVAFIL. Over 569 to 650 the chain is Cytoplasmic; that stretch reads DNTIPGTPEE…SSDEDSQATG (82 aa). Residue Thr649 is modified to Phosphothreonine.

It belongs to the nucleobase:cation symporter-2 (NCS2) (TC 2.A.40) family. Interacts with CLSTN3. Post-translationally, phosphorylated. Ubiquitous.

Its subcellular location is the cell membrane. It catalyses the reaction L-ascorbate(out) + 2 Na(+)(out) = L-ascorbate(in) + 2 Na(+)(in). In terms of biological role, sodium/ascorbate cotransporter. Mediates electrogenic uptake of vitamin C, with a stoichiometry of 2 Na(+) for each ascorbate. The sequence is that of Solute carrier family 23 member 2 (SLC23A2) from Homo sapiens (Human).